Reading from the N-terminus, the 409-residue chain is Lipoyl synthase, mitochondrial (409 aa).

A disordered region spans residues 21-41 (QQQVPPSEEPRNESGAANPPL). 7 residues coordinate [4Fe-4S] cluster: C125, C130, C136, C159, C163, C166, and S375. A Radical SAM core domain is found at 142-364 (EEGDGTATAT…EKEALDMGFL (223 aa)).

The protein belongs to the radical SAM superfamily. Lipoyl synthase family. The cofactor is [4Fe-4S] cluster.

It is found in the mitochondrion. The catalysed reaction is [[Fe-S] cluster scaffold protein carrying a second [4Fe-4S](2+) cluster] + N(6)-octanoyl-L-lysyl-[protein] + 2 oxidized [2Fe-2S]-[ferredoxin] + 2 S-adenosyl-L-methionine + 4 H(+) = [[Fe-S] cluster scaffold protein] + N(6)-[(R)-dihydrolipoyl]-L-lysyl-[protein] + 4 Fe(3+) + 2 hydrogen sulfide + 2 5'-deoxyadenosine + 2 L-methionine + 2 reduced [2Fe-2S]-[ferredoxin]. The protein operates within protein modification; protein lipoylation via endogenous pathway; protein N(6)-(lipoyl)lysine from octanoyl-[acyl-carrier-protein]: step 2/2. In terms of biological role, catalyzes the radical-mediated insertion of two sulfur atoms into the C-6 and C-8 positions of the octanoyl moiety bound to the lipoyl domains of lipoate-dependent enzymes, thereby converting the octanoylated domains into lipoylated derivatives. The protein is Lipoyl synthase, mitochondrial of Trypanosoma brucei gambiense (strain MHOM/CI/86/DAL972).